We begin with the raw amino-acid sequence, 116 residues long: Large ribosomal subunit protein uL18 (116 aa).

Belongs to the universal ribosomal protein uL18 family. Part of the 50S ribosomal subunit; part of the 5S rRNA/L5/L18/L25 subcomplex. Contacts the 5S and 23S rRNAs.

Its function is as follows. This is one of the proteins that bind and probably mediate the attachment of the 5S RNA into the large ribosomal subunit, where it forms part of the central protuberance. The chain is Large ribosomal subunit protein uL18 from Pseudomonas fluorescens (strain SBW25).